Reading from the N-terminus, the 276-residue chain is Large ribosomal subunit protein uL2 (276 aa).

The segment at 211–276 (RNRHRGIRPQ…KLIISRRKGK (66 aa)) is disordered. Positions 230-240 (DHPHGGGEGKK) are enriched in basic and acidic residues.

The protein belongs to the universal ribosomal protein uL2 family. As to quaternary structure, part of the 50S ribosomal subunit. Forms a bridge to the 30S subunit in the 70S ribosome.

Its function is as follows. One of the primary rRNA binding proteins. Required for association of the 30S and 50S subunits to form the 70S ribosome, for tRNA binding and peptide bond formation. It has been suggested to have peptidyltransferase activity; this is somewhat controversial. Makes several contacts with the 16S rRNA in the 70S ribosome. The polypeptide is Large ribosomal subunit protein uL2 (Campylobacter jejuni subsp. doylei (strain ATCC BAA-1458 / RM4099 / 269.97)).